The following is a 1072-amino-acid chain: DNA-directed RNA polymerase subunit beta (1072 aa).

Belongs to the RNA polymerase beta chain family. In terms of assembly, in plastids the minimal PEP RNA polymerase catalytic core is composed of four subunits: alpha, beta, beta', and beta''. When a (nuclear-encoded) sigma factor is associated with the core the holoenzyme is formed, which can initiate transcription.

Its subcellular location is the plastid. It is found in the chloroplast. The catalysed reaction is RNA(n) + a ribonucleoside 5'-triphosphate = RNA(n+1) + diphosphate. Its function is as follows. DNA-dependent RNA polymerase catalyzes the transcription of DNA into RNA using the four ribonucleoside triphosphates as substrates. The protein is DNA-directed RNA polymerase subunit beta of Capsella bursa-pastoris (Shepherd's purse).